The following is a 1706-amino-acid chain: Bifunctional hemolysin/adenylate cyclase (1706 aa).

The segment at 1–399 is a, catalytic; sequence MQQSHQAGYA…RRPSLGAVER (399 aa). An ATP-binding site is contributed by 349-356; it reads AYGVAGKS. Positions 367–405 are disordered; the sequence is GVPGGRSKSSPDVLETVPASPGLRRPSLGAVERQDSGYD. The b, Ala/Gly-rich stretch occupies residues 400–912; the sequence is QDSGYDSLDG…LKHSIKLEVI (513 aa). Residues 500 to 698 are required for interaction with CyaC; the sequence is LSAAVFGLGE…SVVGAPVAVV (199 aa). 2 N6-palmitoyl lysine lipidation sites follow: Lys860 and Lys983. The segment at 913–1656 is c; that stretch reads GGDGDDVVLA…RDADHRVEAI (744 aa). 17 Hemolysin-type calcium-binding repeats span residues 1014 to 1031, 1032 to 1049, 1050 to 1067, 1155 to 1172, 1173 to 1190, 1279 to 1296, 1297 to 1314, 1315 to 1332, 1335 to 1352, 1411 to 1428, 1429 to 1446, 1447 to 1464, 1468 to 1484, 1537 to 1554, 1555 to 1572, 1573 to 1590, and 1603 to 1620; these read IGGAGNDSITGNAHDNFL, AGGAGDDRLDGGAGNDTL, VGGEGHNTVVGGAGDDVF, WGDDGNDTIHGRGGDDIL, RGGLGLDTLYGEDGNDIF, MGQGGDDTVRGGDGDDLL, FGGDGNDMLYGDAGNDTL, YGGLGDDTLEGGAGNDWF, TPAREHDVLRGGAGVDTV, TGDAQANVLRGAGGADVL, AGGEGDDVLLGGDGDDQL, SGDAGRDRLYGEAGDDWF, AANAGNLLDGGDGNDTV, IGDAGANVLNGLAGNDVL, SGGAGDDVLLGDEGSDLL, SGDAGNDDLFGGQGDDTY, and ESGGGHDTIRINAGADQL. The tract at residues 1657–1706 is d, Asp/Gly-rich; the sequence is HAANQAIDPAGIEKLVEAMAQYPDPGAAAAAPPAARVPDTLMQSLAVNWR.

It in the N-terminal section; belongs to the adenylyl cyclase class-2 family. In the C-terminal section; belongs to the RTX prokaryotic toxin family. In terms of processing, released in a processed form. Post-translationally, palmitoylated at Lys-860 and Lys-983 by CyaC. The toxin only becomes active when modified in position Lys-983: palmitoylation is required for efficient membrane insertion and pore formation of the acylated Hemolysin chain.

The protein resides in the secreted. Its subcellular location is the host cell membrane. The catalysed reaction is ATP = 3',5'-cyclic AMP + diphosphate. Activated by host calmodulin. Functionally, bifunctional adenylate cyclase toxin-hemolysin that plays a crucial role in host colonization. It causes whooping cough by acting on mammalian cells by elevating cAMP-concentration and thus disrupts normal cell function. In terms of biological role, adenylate cyclase that is activated by host intracellular calmodulin and catalyzes un-regulated conversion of ATP to cAMP, thereby impairing microbicidal functions of immune effector cells and inducing apoptosis of lung macrophages. Hemolysin that forms small cation-selective membrane channels, leading to hemolytic activity. The hemolytic activity of CyaA is weak compared with that of the HlyA of E.coli. This Bordetella bronchiseptica (strain ATCC BAA-588 / NCTC 13252 / RB50) (Alcaligenes bronchisepticus) protein is Bifunctional hemolysin/adenylate cyclase (cya).